The following is a 485-amino-acid chain: Membrane-bound lytic murein transglycosylase F (485 aa).

The N-terminal stretch at 1 to 29 is a signal peptide; it reads MFAHTALRQRCAKWLLATGLFLLLGACVE. The non-LT domain stretch occupies residues 30-267; it reads KPSTLERVKE…RLKDRYYGHV (238 aa). An LT domain region spans residues 268 to 485; that stretch reads DVLGYVGAYT…DKPADKSSPM (218 aa). Residue Glu314 is part of the active site. The tract at residues 465 to 485 is disordered; sequence EGNLHVPGVNKDKPADKSSPM. Basic and acidic residues predominate over residues 474–485; it reads NKDKPADKSSPM.

In the N-terminal section; belongs to the bacterial solute-binding protein 3 family. The protein in the C-terminal section; belongs to the transglycosylase Slt family.

It localises to the cell outer membrane. The enzyme catalyses Exolytic cleavage of the (1-&gt;4)-beta-glycosidic linkage between N-acetylmuramic acid (MurNAc) and N-acetylglucosamine (GlcNAc) residues in peptidoglycan, from either the reducing or the non-reducing ends of the peptidoglycan chains, with concomitant formation of a 1,6-anhydrobond in the MurNAc residue.. Functionally, murein-degrading enzyme that degrades murein glycan strands and insoluble, high-molecular weight murein sacculi, with the concomitant formation of a 1,6-anhydromuramoyl product. Lytic transglycosylases (LTs) play an integral role in the metabolism of the peptidoglycan (PG) sacculus. Their lytic action creates space within the PG sacculus to allow for its expansion as well as for the insertion of various structures such as secretion systems and flagella. The sequence is that of Membrane-bound lytic murein transglycosylase F from Pseudomonas putida (strain ATCC 700007 / DSM 6899 / JCM 31910 / BCRC 17059 / LMG 24140 / F1).